We begin with the raw amino-acid sequence, 349 residues long: Dihydroorotase (349 aa).

Zn(2+) is bound by residues His-17 and His-19. Substrate-binding positions include 19–21 (HLR) and Asn-45. Lys-103, His-140, and His-178 together coordinate Zn(2+). Lys-103 carries the N6-carboxylysine modification. A substrate-binding site is contributed by His-140. Leu-224 contacts substrate. Asp-252 contacts Zn(2+). Residue Asp-252 is part of the active site. Substrate is bound by residues His-256 and Ala-268.

This sequence belongs to the metallo-dependent hydrolases superfamily. DHOase family. Class II DHOase subfamily. In terms of assembly, homodimer. It depends on Zn(2+) as a cofactor.

It carries out the reaction (S)-dihydroorotate + H2O = N-carbamoyl-L-aspartate + H(+). It functions in the pathway pyrimidine metabolism; UMP biosynthesis via de novo pathway; (S)-dihydroorotate from bicarbonate: step 3/3. In terms of biological role, catalyzes the reversible cyclization of carbamoyl aspartate to dihydroorotate. This is Dihydroorotase from Buchnera aphidicola subsp. Schizaphis graminum (strain Sg).